Here is a 214-residue protein sequence, read N- to C-terminus: Pyrrolidone-carboxylate peptidase (214 aa).

Active-site residues include Glu-79, Cys-142, and His-166.

The protein belongs to the peptidase C15 family. As to quaternary structure, homotetramer.

It localises to the cytoplasm. The catalysed reaction is Release of an N-terminal pyroglutamyl group from a polypeptide, the second amino acid generally not being Pro.. Removes 5-oxoproline from various penultimate amino acid residues except L-proline. In Fusobacterium nucleatum subsp. nucleatum (strain ATCC 25586 / DSM 15643 / BCRC 10681 / CIP 101130 / JCM 8532 / KCTC 2640 / LMG 13131 / VPI 4355), this protein is Pyrrolidone-carboxylate peptidase.